Here is a 331-residue protein sequence, read N- to C-terminus: C4-dicarboxylate-binding periplasmic protein DctP (331 aa).

The first 23 residues, 1 to 23 (MLKHTAKALVCALSLTVAGIVQA), serve as a signal peptide directing secretion.

Belongs to the bacterial solute-binding protein 7 family. The complex comprises the extracytoplasmic solute receptor protein DctP, and the two transmembrane proteins DctQ and DctM.

Its subcellular location is the periplasm. Part of the tripartite ATP-independent periplasmic (TRAP) transport system DctPQM involved in C4-dicarboxylates uptake. The sequence is that of C4-dicarboxylate-binding periplasmic protein DctP from Pseudomonas aeruginosa (strain ATCC 15692 / DSM 22644 / CIP 104116 / JCM 14847 / LMG 12228 / 1C / PRS 101 / PAO1).